The following is a 187-amino-acid chain: Basic helix-loop-helix transcription factor scleraxis (187 aa).

Disordered regions lie at residues 21–83 (LSED…TNSV) and 140–163 (AFFH…QPKQ). The segment covering 34–43 (SDEKPFHLDA) has biased composition (basic and acidic residues). Over residues 50-72 (AGKRRSGKKAGRLHREPRQRHTA) the composition is skewed to basic residues. Positions 67–119 (RQRHTANARERDRTNSVNTAFTALRTLIPTEPADRKLSKIETLRLASSYISHL) constitute a bHLH domain.

In terms of assembly, efficient DNA binding requires dimerization with another bHLH protein. Dimerizes and binds the E-box consensus sequence with E12. As to expression, expressed in the intersomitic, the superficial proximomedial limb mesenchyme and the subectodermal mesenchyme.

Its subcellular location is the nucleus. Its function is as follows. Plays an early essential role in mesoderm formation, as well as a later role in formation of somite-derived chondrogenic lineages. The protein is Basic helix-loop-helix transcription factor scleraxis (SCX) of Gallus gallus (Chicken).